A 293-amino-acid chain; its full sequence is Glycine betaine-binding protein OpuAC (293 aa).

Positions 1–20 are cleaved as a signal peptide; the sequence is MLKKIIGIGVSAMLALSLAA. Cys-21 carries the N-palmitoyl cysteine lipid modification. A lipid anchor (S-diacylglycerol cysteine) is attached at Cys-21.

As to quaternary structure, the complex is composed of two ATP-binding proteins (OpuAA), two transmembrane proteins (OpuAB) and a solute-binding protein (OpuAC). Interacts with FloT.

The protein resides in the cell membrane. It localises to the membrane raft. Involved in a multicomponent binding-protein-dependent transport system for glycine betaine. In Bacillus subtilis (strain 168), this protein is Glycine betaine-binding protein OpuAC (opuAC).